A 131-amino-acid chain; its full sequence is Large ribosomal subunit protein bL19 (131 aa).

The protein belongs to the bacterial ribosomal protein bL19 family.

Functionally, this protein is located at the 30S-50S ribosomal subunit interface and may play a role in the structure and function of the aminoacyl-tRNA binding site. The sequence is that of Large ribosomal subunit protein bL19 from Synechococcus sp. (strain CC9902).